The primary structure comprises 257 residues: ECF RNA polymerase sigma factor SigE (257 aa).

A sigma-70 factor domain-2 region spans residues 87–153 (MPSWDELVRQ…RITTNLFLDM (67 aa)). Residues 111–114 (NQHD) carry the Polymerase core binding motif. The sigma-70 factor domain-4 stretch occupies residues 186 to 236 (SRLGADLQAALDSLPPEFRAAVVLCDIEGLSYEEIGATLGVKLGTVRSRIH). A DNA-binding region (H-T-H motif) is located at residues 211–230 (DIEGLSYEEIGATLGVKLGT).

The protein belongs to the sigma-70 factor family. ECF subfamily. As to quaternary structure, interacts transiently with the RNA polymerase catalytic core formed by RpoA, RpoB, RpoC and RpoZ (2 alpha, 1 beta, 1 beta' and 1 omega subunit) to form the RNA polymerase holoenzyme that can initiate transcription. Interacts (via sigma-70 factor domain 4) with RseA; interaction is abrogated by treatment of cells with H(2)O(2) or detergent.

Sigma factors are initiation factors that promote the attachment of RNA polymerase to specific initiation sites and are then released. Extracytoplasmic function (ECF) sigma factors are held in an inactive form by an anti-sigma factor until released. This Mycolicibacterium smegmatis (strain ATCC 700084 / mc(2)155) (Mycobacterium smegmatis) protein is ECF RNA polymerase sigma factor SigE (sigE).